Consider the following 285-residue polypeptide: MPFAFIEQMKSVIHFDALGLSPIAFDLGVWHLFGLTLHPLIHWYALAYITGILLAWRYVLFLLKQPGTPMKPEQTDDLVFWSTLGILVGGRLAYVLFYQPAILENPLEIFKLWEGGMSYHGGMIGVFLAIWWVKTTNHLSWLRIADYIGCAAPIGLFLGRLANFVNGELWGRPSTMPWAVIFPQAGALPRHPSQLYEAGLEGILLFAFLNYQFFATKARLHPGKLAGFFLVGYGLSRFIVEWFREPDVQLGTLSWGLTMGQTLTIPMVIAGLWLIITSKKREISL.

5 helical membrane passes run 17–37 (ALGLSPIAFDLGVWHLFGLTL), 43–63 (WYALAYITGILLAWRYVLFLL), 78–98 (LVFWSTLGILVGGRLAYVLFY), 113–133 (WEGGMSYHGGMIGVFLAIWWV), and 139–159 (LSWLRIADYIGCAAPIGLFLG). Position 160 (Arg-160) interacts with a 1,2-diacyl-sn-glycero-3-phospho-(1'-sn-glycerol). Helical transmembrane passes span 195–215 (LYEAGLEGILLFAFLNYQFFA), 223–243 (GKLAGFFLVGYGLSRFIVEWF), and 256–276 (GLTMGQTLTIPMVIAGLWLII).

The protein belongs to the Lgt family.

The protein localises to the cell inner membrane. The catalysed reaction is L-cysteinyl-[prolipoprotein] + a 1,2-diacyl-sn-glycero-3-phospho-(1'-sn-glycerol) = an S-1,2-diacyl-sn-glyceryl-L-cysteinyl-[prolipoprotein] + sn-glycerol 1-phosphate + H(+). It participates in protein modification; lipoprotein biosynthesis (diacylglyceryl transfer). In terms of biological role, catalyzes the transfer of the diacylglyceryl group from phosphatidylglycerol to the sulfhydryl group of the N-terminal cysteine of a prolipoprotein, the first step in the formation of mature lipoproteins. The chain is Phosphatidylglycerol--prolipoprotein diacylglyceryl transferase from Zymomonas mobilis subsp. mobilis (strain ATCC 31821 / ZM4 / CP4).